A 482-amino-acid polypeptide reads, in one-letter code: Auxin transporter-like protein 4 (482 aa).

Topologically, residues 1 to 59 (MLSQNQAEEAIVTNMNETEQEGGSSLEEIAEDQSMFNFKSFLWHGGSVWDAWFSCASNQ) are cytoplasmic. The chain crosses the membrane as a helical span at residues 60–77 (VAQVLLTLPYSFSQLGMV). Residues 78–79 (SG) lie on the Extracellular side of the membrane. Residues 80–100 (IVFQIFYGLIGSWTAYLISVL) traverse the membrane as a helical segment. Topologically, residues 101–135 (YVEYRARKEKENVNFKNHVIQWFEVLDGLLGRYWK) are cytoplasmic. Residues 136-156 (ALGLAFNCTFLLFGSVIQLIA) form a helical membrane-spanning segment. At 157 to 172 (CASNIYYINDKLDKRT) the chain is on the extracellular side. A helical membrane pass occupies residues 173 to 193 (WTYIFGACCATTVFIPSFHNY). The Cytoplasmic segment spans residues 194–196 (RIW). Residues 197-217 (SFLGLGMTTYTAWYMAIAAIV) traverse the membrane as a helical segment. Residues 218-232 (NGQIENVVHSGPTKL) lie on the Extracellular side of the membrane. A helical transmembrane segment spans residues 233–253 (VLYFTGATNILYTFGGHAVTV). Over 254–266 (EIMHAMWKPQKFK) the chain is Cytoplasmic. A helical transmembrane segment spans residues 267–287 (YIYFLATLYVFTLTIPSAVAV). At 288-314 (YWAFGDELLNHSNAFSLLPKNGFRDAA) the chain is on the extracellular side. The N-linked (GlcNAc...) asparagine glycan is linked to asparagine 297. The helical transmembrane segment at 315–335 (VILMLIHQFITFGFACTPLYF) threads the bilayer. Topologically, residues 336 to 356 (VWEKVIGMHDTKSICLRALVR) are cytoplasmic. Residues 357–377 (LPVVIPIWFLAIIFPFFGPIN) form a helical membrane-spanning segment. Position 378 (serine 378) is a topological domain, extracellular. Residues 379–399 (AVGALLVTFTVYIIPALAHML) traverse the membrane as a helical segment. Residues 400–422 (TYRTASARKNAVEKPPSFLPSWT) lie on the Cytoplasmic side of the membrane. A helical membrane pass occupies residues 423–443 (AVYVLNAFIVVWVLVVGFGFG). At 444-482 (GWASMTNFIRQIDTFGLFAKCYQCKPPTPPQAPSPHARH) the chain is on the extracellular side.

It belongs to the amino acid/polyamine transporter 2 family. Amino acid/auxin permease (AAAP) (TC 2.A.18.1) subfamily. As to expression, shoots and roots of nodulating plants, at low levels.

Its subcellular location is the cell membrane. Carrier protein involved in proton-driven auxin influx. Mediates the formation of auxin gradient from developing leaves (site of auxin biosynthesis) to tips by contributing to the loading of auxin in vascular tissues and facilitating acropetal (base to tip) auxin transport within inner tissues of the root apex, and basipetal (tip to base) auxin transport within outer tissues of the root apex. May be involved in lateral roots and nodules formation. The protein is Auxin transporter-like protein 4 (LAX4) of Medicago truncatula (Barrel medic).